The following is a 180-amino-acid chain: Acireductone dioxygenase (180 aa).

Fe(2+)-binding residues include histidine 97, histidine 99, glutamate 103, and histidine 141. Positions 97, 99, 103, and 141 each coordinate Ni(2+).

Belongs to the acireductone dioxygenase (ARD) family. In terms of assembly, monomer. Fe(2+) is required as a cofactor. It depends on Ni(2+) as a cofactor.

It catalyses the reaction 1,2-dihydroxy-5-(methylsulfanyl)pent-1-en-3-one + O2 = 3-(methylsulfanyl)propanoate + CO + formate + 2 H(+). The catalysed reaction is 1,2-dihydroxy-5-(methylsulfanyl)pent-1-en-3-one + O2 = 4-methylsulfanyl-2-oxobutanoate + formate + 2 H(+). Its pathway is amino-acid biosynthesis; L-methionine biosynthesis via salvage pathway; L-methionine from S-methyl-5-thio-alpha-D-ribose 1-phosphate: step 5/6. Its function is as follows. Catalyzes 2 different reactions between oxygen and the acireductone 1,2-dihydroxy-3-keto-5-methylthiopentene (DHK-MTPene) depending upon the metal bound in the active site. Fe-containing acireductone dioxygenase (Fe-ARD) produces formate and 2-keto-4-methylthiobutyrate (KMTB), the alpha-ketoacid precursor of methionine in the methionine recycle pathway. Ni-containing acireductone dioxygenase (Ni-ARD) produces methylthiopropionate, carbon monoxide and formate, and does not lie on the methionine recycle pathway. The polypeptide is Acireductone dioxygenase (Yersinia pseudotuberculosis serotype O:1b (strain IP 31758)).